Consider the following 155-residue polypeptide: S-ribosylhomocysteine lyase (155 aa).

Positions 57, 61, and 124 each coordinate Fe cation.

This sequence belongs to the LuxS family. In terms of assembly, homodimer. It depends on Fe cation as a cofactor.

The enzyme catalyses S-(5-deoxy-D-ribos-5-yl)-L-homocysteine = (S)-4,5-dihydroxypentane-2,3-dione + L-homocysteine. In terms of biological role, involved in the synthesis of autoinducer 2 (AI-2) which is secreted by bacteria and is used to communicate both the cell density and the metabolic potential of the environment. The regulation of gene expression in response to changes in cell density is called quorum sensing. Catalyzes the transformation of S-ribosylhomocysteine (RHC) to homocysteine (HC) and 4,5-dihydroxy-2,3-pentadione (DPD). This is S-ribosylhomocysteine lyase from Listeria monocytogenes serotype 4a (strain HCC23).